We begin with the raw amino-acid sequence, 23 residues long: Augerpeptide hhe7a (23 aa).

3 cysteine pairs are disulfide-bonded: C3–C11, C6–C19, and C10–C22.

Expressed by the venom duct.

The protein resides in the secreted. Functionally, causes abnormal twist followed by immobility when injected into C.elegans. This is Augerpeptide hhe7a from Hastula hectica (Sea snail).